A 526-amino-acid polypeptide reads, in one-letter code: Tyrosine 2,3-aminomutase (526 aa).

Tyr-41 serves as the catalytic Proton donor/acceptor. His-71 provides a ligand contact to substrate. Residues 130-132 constitute a cross-link (5-imidazolinone (Ala-Gly)); that stretch reads ASG. Ser-131 is modified (2,3-didehydroalanine (Ser)). Asn-183 and Arg-288 together coordinate substrate.

Belongs to the TAL/TAM family. As to quaternary structure, homotetramer; dimer of dimers. In terms of processing, contains an active site 4-methylidene-imidazol-5-one (MIO), which is formed autocatalytically by cyclization and dehydration of residues Ala-Ser-Gly.

The catalysed reaction is L-tyrosine = 3-amino-3-(4-hydroxyphenyl)propanoate. It carries out the reaction L-tyrosine = (E)-4-coumarate + NH4(+). Has aminomutase and, to a much lesser extent, ammonia-lyase activity. Primarily, catalyzes the rearrangement of L-tyrosine to S-beta-tyrosine, which is probably incorporated into secondary metabolite myxovalargin. The aminomutase activity exclusively produces S-beta-tyrosine. This Myxococcus fulvus protein is Tyrosine 2,3-aminomutase.